The primary structure comprises 415 residues: Thyroxine-binding globulin (415 aa).

An N-terminal signal peptide occupies residues 1–20; sequence MSPFLYLVLLVLGLHATIHC. N-linked (GlcNAc...) asparagine glycosylation is found at Asn36, Asn99, Asn165, and Asn253. The thyroxine site is built by Asn293 and Arg398.

Belongs to the serpin family.

The protein localises to the secreted. In terms of biological role, major thyroid hormone transport protein in serum. The protein is Thyroxine-binding globulin (SERPINA7) of Pan troglodytes (Chimpanzee).